A 118-amino-acid polypeptide reads, in one-letter code: Large ribosomal subunit protein bL17 (118 aa).

It belongs to the bacterial ribosomal protein bL17 family. Part of the 50S ribosomal subunit. Contacts protein L32.

The protein is Large ribosomal subunit protein bL17 of Campylobacter concisus (strain 13826).